A 292-amino-acid polypeptide reads, in one-letter code: 33 kDa chaperonin (292 aa).

Disulfide bonds link Cys230–Cys232 and Cys263–Cys266.

Belongs to the HSP33 family. Under oxidizing conditions two disulfide bonds are formed involving the reactive cysteines. Under reducing conditions zinc is bound to the reactive cysteines and the protein is inactive.

The protein localises to the cytoplasm. In terms of biological role, redox regulated molecular chaperone. Protects both thermally unfolding and oxidatively damaged proteins from irreversible aggregation. Plays an important role in the bacterial defense system toward oxidative stress. The polypeptide is 33 kDa chaperonin (Shigella boydii serotype 4 (strain Sb227)).